The sequence spans 102 residues: Large ribosomal subunit protein bL21 (102 aa).

The protein belongs to the bacterial ribosomal protein bL21 family. Part of the 50S ribosomal subunit. Contacts protein L20.

Functionally, this protein binds to 23S rRNA in the presence of protein L20. This chain is Large ribosomal subunit protein bL21, found in Nocardioides sp. (strain ATCC BAA-499 / JS614).